A 327-amino-acid polypeptide reads, in one-letter code: Selenate reductase subunit beta (327 aa).

4Fe-4S ferredoxin-type domains lie at 6 to 35 (LAYV…RDGR), 124 to 155 (NHYF…KREE), and 157 to 186 (GLVV…FNLQ). Residues Cys-15, Cys-18, Cys-21, Cys-25, Cys-133, Cys-136, and Cys-141 each contribute to the [4Fe-4S] cluster site. [3Fe-4S] cluster contacts are provided by Cys-145, Cys-166, and Cys-172. [4Fe-4S] cluster is bound by residues Cys-176, Cys-193, Cys-196, Cys-208, and Cys-212.

Heterotrimer of alpha (SerA), beta (SerB) and gamma (SerC) subunits. [3Fe-4S] cluster serves as cofactor. The cofactor is [4Fe-4S] cluster.

It is found in the periplasm. The enzyme catalyses selenite + 2 Fe(III)-[cytochrome c] + H2O = 2 Fe(II)-[cytochrome] + selenate + 2 H(+). Its activity is regulated as follows. Enzyme isolated from cells grown in a tungstate rich environment shows a 20-fold reduction in selenate reductase activity. In terms of biological role, component of the selenate reductase, which catalyzes the reduction of selenate to selenite and allows anaerobic growth with selenate as the sole terminal electron acceptor. A c-type di-heme cytochrome of the cytc4 family was shown to donate electrons to the selenate reductase in vitro. SerABC can also use reduced benzyl viologen or reduced methyl viologen as an electron donor. This subunit transfers electrons from SerC to SerA. The reductase is specific for selenate, and cannot reduce nitrate, nitrite, chlorate or sulfate. This is Selenate reductase subunit beta from Thauera selenatis.